The chain runs to 81 residues: MKTLLLTLVVVTIVCLDLGYTLKCNKLIPIASKTCTAGKNLCYKMFMMSDLTIPVKRGCIDVCPKNSLLVKYVCCNTDRCN.

The first 21 residues, 1 to 21 (MKTLLLTLVVVTIVCLDLGYT), serve as a signal peptide directing secretion. 4 disulfides stabilise this stretch: Cys-24/Cys-42, Cys-35/Cys-59, Cys-63/Cys-74, and Cys-75/Cys-80.

The protein belongs to the three-finger toxin family. Short-chain subfamily. Type IA cytotoxin sub-subfamily. As to quaternary structure, monomer in solution; Homodimer and oligomer in the presence of negatively charged lipids forming a pore with a size ranging between 20 and 30 Angstroms. In terms of tissue distribution, expressed by the venom gland.

Its subcellular location is the secreted. It is found in the target cell membrane. Functionally, shows cytolytic activity on many different cells by forming pore in lipid membranes. In vivo, increases heart rate or kills the animal by cardiac arrest. In addition, it binds to heparin with high affinity, interacts with Kv channel-interacting protein 1 (KCNIP1) in a calcium-independent manner, and binds to integrin alpha-V/beta-3 (ITGAV/ITGB3) with moderate affinity. The protein is Cytotoxin I-like T-15 of Naja atra (Chinese cobra).